The following is a 256-amino-acid chain: 1-(5-phosphoribosyl)-5-[(5-phosphoribosylamino)methylideneamino] imidazole-4-carboxamide isomerase (256 aa).

Residue aspartate 8 is the Proton acceptor of the active site. Residue aspartate 130 is the Proton donor of the active site.

Belongs to the HisA/HisF family.

It localises to the cytoplasm. It catalyses the reaction 1-(5-phospho-beta-D-ribosyl)-5-[(5-phospho-beta-D-ribosylamino)methylideneamino]imidazole-4-carboxamide = 5-[(5-phospho-1-deoxy-D-ribulos-1-ylimino)methylamino]-1-(5-phospho-beta-D-ribosyl)imidazole-4-carboxamide. Its pathway is amino-acid biosynthesis; L-histidine biosynthesis; L-histidine from 5-phospho-alpha-D-ribose 1-diphosphate: step 4/9. This is 1-(5-phosphoribosyl)-5-[(5-phosphoribosylamino)methylideneamino] imidazole-4-carboxamide isomerase from Chlorobium phaeobacteroides (strain DSM 266 / SMG 266 / 2430).